Here is a 991-residue protein sequence, read N- to C-terminus: MLWPAALVAMFALAARAREIDNVTCSVVYGSNVARISKDYWLAQEGSLVSFMTFENDDPVYFFMGRALGTGASGGKYLYRVTRDNNTNVSHVQTSLFIPEHFNGGILLDMGSNYTHDAETDPEFLNARYLVVNDTEDSVREETLGPCPEMLRTLDVSGRTTLLYPSRYLHARDRMQVEKTMDTAKCVSTSVNLDATVVFSVDFPFSERAILRVTQTFYPDDRPQKHLLYLASQGGKTVHYSEVSATVTPLPGGNASFNVTIEFTDQPDDTTIHLWVSPKGINDDPDAVSAYYILNSLSSYDDPYAHEEISCDSVYQNIVMVLGSVVNITSPDPLPRAPDYSYPTDDPAGETTESAVTWLEATAQTADEATTPLAAHATDGYEPTTAAATLSTTEDLTQETSTPTVTTVIDPTSGAVTTESRTTEGTAANVATTEAAGTEGQNQEATTAGGPTNAATTLGHQTIEAATVEDSTTTARAAEYPTPTTTTVEPRPAGGTTIEDPTDSPAIEDTTTPTTTAAKVTALKTAAAEGPTPCVTTYTGSDTEAAQSATSISDAVTPEDLTPETTTPVDWSVTSTYISVADGTSMPAPTPSAVAHEASTTPAPTATAVPTSHTPKPQESTSTPSRAPTTGVAPVTANSLSPAATSSERIVILNTATASSGPGASTGATTAPISPPWSASPAGDGVTTSAARTLEPSSTRKAVAAESTTAADDVATSELGSGDYGDHATEPPRIVITNPPGITTLHDADAAEEDPWPTRPLYSVNIVNATLTANGMLTATCMAAAKAKHAITFTWHVGSNMVPAITGPPEPGLMFNGNRAWSSRLQTVEYGISPSARLACMACTVPPAQRYCAHDVAVVARHDRLELDMQVDVATVSVVCSGLDGVESEPYFVWTANGRPVPLGSVRTKRIPNDYGTPARWQSAIHISRFFVPAGHRDVYECTATLASGETIKATKNWSNTDYLALQKNAAARSTFVVAGGITAFAVAELL.

Residues 1–17 form the signal peptide; that stretch reads MLWPAALVAMFALAARA. Disordered regions lie at residues 332-352, 392-425, 469-511, 542-569, 587-641, and 658-734; these read DPLP…GETT, TTED…TTEG, EDST…EDTT, DTEA…TTPV, PAPT…NSLS, and ASSG…PPRI. Low complexity predominate over residues 400–413; it reads TSTPTVTTVIDPTS. The segment covering 414-425 has biased composition (polar residues); that stretch reads GAVTTESRTTEG. The span at 472-493 shows a compositional bias: low complexity; the sequence is TTTARAAEYPTPTTTTVEPRPA. The span at 542 to 554 shows a compositional bias: polar residues; the sequence is DTEAAQSATSISD. Composition is skewed to low complexity over residues 556-569 and 598-615; these read VTPE…TTPV and ASTT…SHTP. 2 stretches are compositionally biased toward polar residues: residues 617 to 628 and 658 to 667; these read PQESTSTPSRAP and ASSGPGASTG. The span at 668 to 682 shows a compositional bias: low complexity; that stretch reads ATTAPISPPWSASPA. A compositionally biased stretch (polar residues) spans 686–710; that stretch reads VTTSAARTLEPSSTRKAVAAESTTA.

This is an uncharacterized protein from Psittacid herpesvirus 1 (isolate Amazon parrot/-/97-0001/1997) (PsHV-1).